Reading from the N-terminus, the 755-residue chain is Catalase-peroxidase (755 aa).

Positions 91-245 (WHSAGTYRTA…LAAVQMGLIY (155 aa)) form a cross-link, tryptophyl-tyrosyl-methioninium (Trp-Tyr) (with M-271). The active-site Proton acceptor is His-92. The segment at 193-229 (DNRYGKDPESMQPPGEGTLVAEPAEHGNEESRTNQGE) is disordered. Positions 215–224 (PAEHGNEESR) are enriched in basic and acidic residues. A cross-link (tryptophyl-tyrosyl-methioninium (Tyr-Met) (with W-91)) is located at residues 245-271 (YVNPEGPEGNPDPVASAKDIRETFGRM). His-286 is a heme binding site.

Belongs to the peroxidase family. Peroxidase/catalase subfamily. Homodimer or homotetramer. Heme b serves as cofactor. Formation of the three residue Trp-Tyr-Met cross-link is important for the catalase, but not the peroxidase activity of the enzyme.

The enzyme catalyses H2O2 + AH2 = A + 2 H2O. The catalysed reaction is 2 H2O2 = O2 + 2 H2O. Its function is as follows. Bifunctional enzyme with both catalase and broad-spectrum peroxidase activity. The protein is Catalase-peroxidase of Pseudomonas fluorescens (strain Pf0-1).